Consider the following 124-residue polypeptide: U12-barytoxin-Tl1a (124 aa).

The N-terminal stretch at 1–20 (MKTMIAWLVLLTFAAALCFA) is a signal peptide. A propeptide spanning residues 21–78 (DEGLKQEHMNERKKSRFREDIPDEISEDLLLQEMEAMEAELLEKEMRMEENRNSREKR) is cleaved from the precursor. 3 disulfide bridges follow: cysteine 79–cysteine 99, cysteine 86–cysteine 104, and cysteine 98–cysteine 118.

It belongs to the neurotoxin 14 (magi-1) family. 04 (ICK-6) subfamily. Expressed by the venom gland.

The protein localises to the secreted. Ion channel inhibitor. The sequence is that of U12-barytoxin-Tl1a from Trittame loki (Brush-footed trapdoor spider).